The primary structure comprises 232 residues: Large ribosomal subunit protein uL1 (232 aa).

It belongs to the universal ribosomal protein uL1 family. Part of the 50S ribosomal subunit.

In terms of biological role, binds directly to 23S rRNA. The L1 stalk is quite mobile in the ribosome, and is involved in E site tRNA release. Protein L1 is also a translational repressor protein, it controls the translation of the L11 operon by binding to its mRNA. The polypeptide is Large ribosomal subunit protein uL1 (Chlamydia pneumoniae (Chlamydophila pneumoniae)).